The following is a 284-amino-acid chain: NAD kinase (284 aa).

Aspartate 60 (proton acceptor) is an active-site residue. NAD(+)-binding positions include 60–61 (DG), 134–135 (NE), arginine 145, lysine 162, aspartate 164, 175–180 (TAYSFS), and glutamine 234.

The protein belongs to the NAD kinase family. A divalent metal cation serves as cofactor.

It is found in the cytoplasm. It catalyses the reaction NAD(+) + ATP = ADP + NADP(+) + H(+). Functionally, involved in the regulation of the intracellular balance of NAD and NADP, and is a key enzyme in the biosynthesis of NADP. Catalyzes specifically the phosphorylation on 2'-hydroxyl of the adenosine moiety of NAD to yield NADP. This is NAD kinase from Clostridium botulinum (strain Eklund 17B / Type B).